The following is a 161-amino-acid chain: NAD(P)H-quinone oxidoreductase subunit I, chloroplastic (161 aa).

4Fe-4S ferredoxin-type domains lie at 55-84 (GRIHFEFDKCIACEVCVRVCPIDLPVVDWK) and 95-124 (LNYSIDFGICIFCGNCIEYCPTNCLSMTEE). Cys64, Cys67, Cys70, Cys74, Cys104, Cys107, Cys110, and Cys114 together coordinate [4Fe-4S] cluster.

The protein belongs to the complex I 23 kDa subunit family. As to quaternary structure, NDH is composed of at least 16 different subunits, 5 of which are encoded in the nucleus. Requires [4Fe-4S] cluster as cofactor.

Its subcellular location is the plastid. The protein resides in the chloroplast thylakoid membrane. The enzyme catalyses a plastoquinone + NADH + (n+1) H(+)(in) = a plastoquinol + NAD(+) + n H(+)(out). It carries out the reaction a plastoquinone + NADPH + (n+1) H(+)(in) = a plastoquinol + NADP(+) + n H(+)(out). Functionally, NDH shuttles electrons from NAD(P)H:plastoquinone, via FMN and iron-sulfur (Fe-S) centers, to quinones in the photosynthetic chain and possibly in a chloroplast respiratory chain. The immediate electron acceptor for the enzyme in this species is believed to be plastoquinone. Couples the redox reaction to proton translocation, and thus conserves the redox energy in a proton gradient. The protein is NAD(P)H-quinone oxidoreductase subunit I, chloroplastic of Lotus japonicus (Lotus corniculatus var. japonicus).